The chain runs to 330 residues: Succinylglutamate desuccinylase (330 aa).

Positions 53, 56, and 147 each coordinate Zn(2+). Glutamate 210 is a catalytic residue.

It belongs to the AspA/AstE family. Succinylglutamate desuccinylase subfamily. Zn(2+) serves as cofactor.

It carries out the reaction N-succinyl-L-glutamate + H2O = L-glutamate + succinate. Its pathway is amino-acid degradation; L-arginine degradation via AST pathway; L-glutamate and succinate from L-arginine: step 5/5. Its function is as follows. Transforms N(2)-succinylglutamate into succinate and glutamate. In Yersinia pseudotuberculosis serotype O:1b (strain IP 31758), this protein is Succinylglutamate desuccinylase.